Here is a 356-residue protein sequence, read N- to C-terminus: Guanine nucleotide-binding protein alpha-15 subunit (356 aa).

Residue G2 is the site of N-myristoyl glycine attachment. A lipid anchor (S-palmitoyl cysteine) is attached at C5. In terms of domain architecture, G-alpha spans 33-356; it reads GNQKLLLLGT…GRNLRGTGME (324 aa). Residues 36–49 are G1 motif; that stretch reads KLLLLGTGECGKST. Residues 41 to 48, 177 to 183, 202 to 206, 271 to 274, and A328 each bind GTP; these read GTGECGKS, LRIRIPT, DVGGQ, and NKRD. Residues S48 and T183 each contribute to the Mg(2+) site. A G2 motif region spans residues 175-183; that stretch reads DMLRIRIPT. The interval 198-207 is G3 motif; that stretch reads FRIFDVGGQR. Residues 267–274 are G4 motif; it reads ILFLNKRD. Positions 326–331 are G5 motif; it reads TCATDT.

This sequence belongs to the G-alpha family. As to quaternary structure, g proteins are composed of 3 units; alpha, beta and gamma. The alpha chain contains the guanine nucleotide binding site.

Its function is as follows. Guanine nucleotide-binding proteins (G proteins) are involved as modulators or transducers in various transmembrane signaling systems. This chain is Guanine nucleotide-binding protein alpha-15 subunit (gpa-15), found in Caenorhabditis briggsae.